The chain runs to 276 residues: Small ribosomal subunit protein uS2 (276 aa).

At S2 the chain carries N-acetylserine.

The protein belongs to the universal ribosomal protein uS2 family. As to quaternary structure, component of the small ribosomal subunit. Mature ribosomes consist of a small (40S) and a large (60S) subunit. The 40S subunit contains about 33 different proteins and 1 molecule of RNA (18S). The 60S subunit contains about 49 different proteins and 3 molecules of RNA (28S, 5.8S and 5S). Interacts with rps-21.

The protein localises to the cytoplasm. Its function is as follows. Required for the assembly and/or stability of the 40S ribosomal subunit. Required for the processing of the 20S rRNA-precursor to mature 18S rRNA in a late step of the maturation of 40S ribosomal subunits. Involved in cold-warm shock-induced translocation of the RNA exosome components from the nucleolus to nucleoplasm. The sequence is that of Small ribosomal subunit protein uS2 from Caenorhabditis elegans.